The chain runs to 465 residues: Chromosomal replication initiator protein DnaA (465 aa).

Residues 1 to 87 form a domain I, interacts with DnaA modulators region; the sequence is MLWTDCLTRL…RPGSILSSSE (87 aa). Residues 81–123 are disordered; that stretch reads SILSSSEQPATTTAALQTAPIPQPAKGKREPEPVANTAVSSKS. Residues 88–100 show a composition bias toward low complexity; that stretch reads QPATTTAALQTAP. The tract at residues 88–127 is domain II; that stretch reads QPATTTAALQTAPIPQPAKGKREPEPVANTAVSSKSSKKK. The interval 128–345 is domain III, AAA+ region; it reads LLNPQFTFSL…GALNKVVAIS (218 aa). ATP-binding residues include glycine 173, glycine 175, lysine 176, and threonine 177. The domain IV, binds dsDNA stretch occupies residues 346–465; it reads RFKGAPIDLD…YKNLLRLLQS (120 aa).

This sequence belongs to the DnaA family. In terms of assembly, oligomerizes as a right-handed, spiral filament on DNA at oriC.

It localises to the cytoplasm. Plays an essential role in the initiation and regulation of chromosomal replication. ATP-DnaA binds to the origin of replication (oriC) to initiate formation of the DNA replication initiation complex once per cell cycle. Binds the DnaA box (a 9 base pair repeat at the origin) and separates the double-stranded (ds)DNA. Forms a right-handed helical filament on oriC DNA; dsDNA binds to the exterior of the filament while single-stranded (ss)DNA is stabiized in the filament's interior. The ATP-DnaA-oriC complex binds and stabilizes one strand of the AT-rich DNA unwinding element (DUE), permitting loading of DNA polymerase. After initiation quickly degrades to an ADP-DnaA complex that is not apt for DNA replication. Binds acidic phospholipids. This Acinetobacter baumannii (strain SDF) protein is Chromosomal replication initiator protein DnaA.